An 80-amino-acid polypeptide reads, in one-letter code: Acyl carrier protein (80 aa).

The region spanning 2–77 (SDIEQRVKKI…QAIDYAKAHV (76 aa)) is the Carrier domain. Serine 37 carries the O-(pantetheine 4'-phosphoryl)serine modification.

Belongs to the acyl carrier protein (ACP) family. 4'-phosphopantetheine is transferred from CoA to a specific serine of apo-ACP by AcpS. This modification is essential for activity because fatty acids are bound in thioester linkage to the sulfhydryl of the prosthetic group.

The protein localises to the cytoplasm. The protein operates within lipid metabolism; fatty acid biosynthesis. Functionally, carrier of the growing fatty acid chain in fatty acid biosynthesis. This chain is Acyl carrier protein, found in Herminiimonas arsenicoxydans.